Here is a 600-residue protein sequence, read N- to C-terminus: Probable tripeptidyl-peptidase SED4 (600 aa).

Residues 1–22 form the signal peptide; sequence MVSFTLRAIGACLIGLPALITA. The propeptide at 23–202 is removed in mature form; sequence APTSHVSNGF…SVFTSDLEMT (180 aa). Residues Asn-210 and Asn-281 are each glycosylated (N-linked (GlcNAc...) asparagine). Residues 212-600 form the Peptidase S53 domain; that stretch reads TITPDCIREL…FEKLSKLVLI (389 aa). Active-site charge relay system residues include Glu-288 and Asp-292. N-linked (GlcNAc...) asparagine glycosylation is found at Asn-323 and Asn-404. Residue Ser-504 is the Charge relay system of the active site. Asp-546, Ile-547, Gly-579, and Asp-581 together coordinate Ca(2+).

Requires Ca(2+) as cofactor.

The protein localises to the secreted. The protein resides in the extracellular space. It catalyses the reaction Release of an N-terminal tripeptide from a polypeptide.. Functionally, secreted tripeptidyl-peptidase which degrades proteins at acidic pHs and is involved in virulence. This chain is Probable tripeptidyl-peptidase SED4 (SED4), found in Trichophyton verrucosum (strain HKI 0517).